We begin with the raw amino-acid sequence, 1180 residues long: Pyruvate carboxylase 2 (1180 aa).

Residue S2 is modified to N-acetylserine. A Biotin carboxylation domain is found at 19–471 (EKNKILVANR…WTTFIDDTPQ (453 aa)). The ATP site is built by K137, E221, and H256. Positions 141–338 (RHLAARANVP…IVSAQIQIAA (198 aa)) constitute an ATP-grasp domain. The active site involves R313. The region spanning 558–825 (TLLMDTTWRD…DTGINVEHVR (268 aa)) is the Pyruvate carboxyltransferase domain. Residues 566-570 (RDAHQ) and R639 contribute to the substrate site. Position 567 (D567) interacts with a divalent metal cation. 3 residues coordinate a divalent metal cation: K735, H765, and H767. K735 carries the N6-carboxylysine modification. T899 serves as a coordination point for substrate. One can recognise a Biotinyl-binding domain in the interval 1095 to 1170 (KADVHDTHQI…DASDLLVVLE (76 aa)). K1136 is modified (N6-biotinyllysine).

In terms of assembly, homotetramer. The cofactor is biotin. Requires Zn(2+) as cofactor.

It localises to the cytoplasm. The enzyme catalyses hydrogencarbonate + pyruvate + ATP = oxaloacetate + ADP + phosphate + H(+). It functions in the pathway carbohydrate biosynthesis; gluconeogenesis. Its function is as follows. Pyruvate carboxylase catalyzes a 2-step reaction, involving the ATP-dependent carboxylation of the covalently attached biotin in the first step and the transfer of the carboxyl group to pyruvate in the second. In Saccharomyces cerevisiae (strain ATCC 204508 / S288c) (Baker's yeast), this protein is Pyruvate carboxylase 2 (PYC2).